The sequence spans 122 residues: Pupal cuticle protein Edg-78E (122 aa).

A signal peptide spans 1–16 (MYKYLFCLALIGCACA). Positions 36–96 (EGNYQYAYET…PVGDHLPTPP (61 aa)) constitute a Chitin-binding type R&amp;R domain.

As to expression, imaginal (anterior) epidermis.

Functionally, component of the cuticle of the pupa of fruit fly. The sequence is that of Pupal cuticle protein Edg-78E (Edg78E) from Drosophila melanogaster (Fruit fly).